Here is a 414-residue protein sequence, read N- to C-terminus: Peptide chain release factor subunit 1 (414 aa).

Belongs to the eukaryotic release factor 1 family. In terms of assembly, heterodimer of two subunits, one of which binds GTP.

The protein resides in the cytoplasm. In terms of biological role, directs the termination of nascent peptide synthesis (translation) in response to the termination codons UAA, UAG and UGA. The chain is Peptide chain release factor subunit 1 (prf1) from Pyrococcus abyssi (strain GE5 / Orsay).